The following is a 364-amino-acid chain: Histidinol-phosphate aminotransferase (364 aa).

Lys226 carries the N6-(pyridoxal phosphate)lysine modification.

The protein belongs to the class-II pyridoxal-phosphate-dependent aminotransferase family. Histidinol-phosphate aminotransferase subfamily. Homodimer. Pyridoxal 5'-phosphate serves as cofactor.

It catalyses the reaction L-histidinol phosphate + 2-oxoglutarate = 3-(imidazol-4-yl)-2-oxopropyl phosphate + L-glutamate. The protein operates within amino-acid biosynthesis; L-histidine biosynthesis; L-histidine from 5-phospho-alpha-D-ribose 1-diphosphate: step 7/9. The protein is Histidinol-phosphate aminotransferase of Campylobacter jejuni (strain RM1221).